We begin with the raw amino-acid sequence, 358 residues long: MSADAAAGAPLPRLCCLEKGPNGYGFHLHGEKGKVGQYIRLVEPGSPAEKAGLLAGDRLVEVNGENVEKETHQQVVSRIRAALNAVRLLVVDPDTDEQFRKLGVQIRGELLRAQAGPEQAGPPAAPGEQGPAGENEPREVEKSHPERRELRPRLCAMKKGPNGYGFNLHSDKSRPGQFIRAVDPDSPAEASGLREQDRIVEVNGVCVEGKQHGDVVTAIKAGGDEAKLLVVDKETDEFFKKCKVVPSSEHLNGPLPEPFTNGEIQKNNPETLAPAASESPRPALARSASSDTSEELASQDSPKKEDSTAPSSTSSSSDPILDFSISLAVAKERAHQKRSSRRAPQMDWSEKKELFSNL.

Ser-2 carries the N-acetylserine modification. Ser-2 and Ser-46 each carry phosphoserine. The PDZ 1 domain occupies 14–94; the sequence is LCCLEKGPNG…AVRLLVVDPD (81 aa). The segment covering 114–134 has biased composition (low complexity); the sequence is QAGPEQAGPPAAPGEQGPAGE. The interval 114 to 151 is disordered; the sequence is QAGPEQAGPPAAPGEQGPAGENEPREVEKSHPERRELR. The span at 135-151 shows a compositional bias: basic and acidic residues; the sequence is NEPREVEKSHPERRELR. Residues 154–234 form the PDZ 2 domain; sequence LCAMKKGPNG…EAKLLVVDKE (81 aa). The interval 247–358 is disordered; the sequence is SSEHLNGPLP…SEKKELFSNL (112 aa). Over residues 272-290 the composition is skewed to low complexity; that stretch reads LAPAASESPRPALARSASS. Residues Ser-279, Ser-289, and Ser-290 each carry the phosphoserine modification. Thr-292 is modified (phosphothreonine). Residues Ser-293, Ser-298, and Ser-301 each carry the phosphoserine modification. The segment covering 308–327 has biased composition (low complexity); that stretch reads TAPSSTSSSSDPILDFSISL. Basic and acidic residues predominate over residues 348 to 358; it reads WSEKKELFSNL.

In terms of assembly, homodimer, and heterodimer with NHERF2. Binds the N-termini of EZR, RDX and MSN. Binds the C-termini of PDGFRA, PDGFRB, ADRB2, NOS2 and CFTR. Binds ARHGAP17, EPI64, RACK1, OPRK1, GNAQ, CTNNB1 and PLCB3. Binds PDZK1. Interacts with CLCN3. Binds the C-terminus of PAG1. In resting T-cells, part of a PAG1-NHERF1-MSN complex which is disrupted upon TCR activation. Forms a complex with CFTR and SLC4A7. Forms a complex with SLC4A7 and ATP6V1B1. Interacts with TRPC4 (via the PDZ-binding domain). Directly interacts with HTR4. Interacts (via the PDZ 1 domain) with PODXL (via the C-terminal PDZ-binding motif DTHL); interaction is not detected in glomerular epithelium cells. Interacts (via the PDZ 1 domain) with PODXL (via the C-terminal PDZ-binding motif DTHL); the interaction take place early in the secretory pathway and is necessary for its apical membrane sorting. Interacts with SLC26A3. Interacts with MCC. Interacts with SLC34A1. Interacts (via the PDZ domains) with SLC26A6 isoform 4 and isoform 5. Interacts (via PDZ domains) with ACE2 (via PDZ-binding motif); the interaction may enhance ACE2 membrane residence. In terms of processing, phosphorylated on serine residues. As to expression, detected in ileum, duodenum and in kidney, where it is found in the glomerulus, the proximal tubule, the thick ascending limb of Henle's loop and the cortical collecting duct.

It is found in the cytoplasm. It localises to the apical cell membrane. The protein localises to the cell projection. The protein resides in the filopodium. Its subcellular location is the ruffle. It is found in the microvillus. It localises to the endomembrane system. In terms of biological role, scaffold protein that connects plasma membrane proteins with members of the ezrin/moesin/radixin family and thereby helps to link them to the actin cytoskeleton and to regulate their surface expression. Necessary for recycling of internalized ADRB2. Was first known to play a role in the regulation of the activity and subcellular location of SLC9A3. Necessary for cAMP-mediated phosphorylation and inhibition of SLC9A3. Involved in sperm capacitation. May participate in the regulation of the chloride and bicarbonate homeostasis in spermatozoa. May enhance Wnt signaling. May participate in HTR4 targeting to microvilli. Involved in the regulation of phosphate reabsorption in the renal proximal tubules. The sequence is that of Na(+)/H(+) exchange regulatory cofactor NHE-RF1 (NHERF1) from Oryctolagus cuniculus (Rabbit).